Consider the following 566-residue polypeptide: Alpha-keto-acid decarboxylase (566 aa).

Glu61 provides a ligand contact to thiamine diphosphate. The interval 396–478 is thiamine pyrophosphate binding; the sequence is TSFYGMADHR…VVVNNDGYTV (83 aa). Positions 446, 473, and 475 each coordinate Mg(2+).

It belongs to the TPP enzyme family. A metal cation serves as cofactor. It depends on thiamine diphosphate as a cofactor.

In terms of biological role, decarboxylates branched-chain and aromatic alpha-keto acids to aldehydes. The chain is Alpha-keto-acid decarboxylase (kdc) from Mycobacterium ulcerans (strain Agy99).